We begin with the raw amino-acid sequence, 154 residues long: Ribonuclease H (154 aa).

One can recognise an RNase H type-1 domain in the interval 3–144 (ELPVVTIYTD…ADQLARDGIV (142 aa)). Aspartate 12, glutamate 50, aspartate 72, and aspartate 136 together coordinate Mg(2+).

It belongs to the RNase H family. As to quaternary structure, monomer. The cofactor is Mg(2+).

Its subcellular location is the cytoplasm. It carries out the reaction Endonucleolytic cleavage to 5'-phosphomonoester.. In terms of biological role, endonuclease that specifically degrades the RNA of RNA-DNA hybrids. This is Ribonuclease H from Bradyrhizobium diazoefficiens (strain JCM 10833 / BCRC 13528 / IAM 13628 / NBRC 14792 / USDA 110).